The chain runs to 386 residues: Ribonuclease D (386 aa).

In terms of domain architecture, 3'-5' exonuclease spans 3-174 (HTITTTDELA…EIYEYLSAEL (172 aa)). The region spanning 213-294 (SGRVVAIAQQ…ARGMSVPNSE (82 aa)) is the HRDC domain.

The protein belongs to the RNase D family. Requires a divalent metal cation as cofactor.

The protein resides in the cytoplasm. It carries out the reaction Exonucleolytic cleavage that removes extra residues from the 3'-terminus of tRNA to produce 5'-mononucleotides.. Exonuclease involved in the 3' processing of various precursor tRNAs. Initiates hydrolysis at the 3'-terminus of an RNA molecule and releases 5'-mononucleotides. This chain is Ribonuclease D, found in Jannaschia sp. (strain CCS1).